A 98-amino-acid polypeptide reads, in one-letter code: Cystatin-B (98 aa).

The Cystatin domain maps to 4-83; sequence GGTSQPVDAD…PCNGETLELS (80 aa). Positions 46–50 match the Secondary area of contact motif; that stretch reads QCVPG.

This sequence belongs to the cystatin family. Ubiquitously expressed in normal and lipopolysaccharide (LPS)-stimulated tissues including brain, eye, gullet, heart, liver, muscle, stomach, kidney, spleen, pyloric ceca, intestine and gill.

The protein localises to the cytoplasm. With respect to regulation, greatly decreased inhibitory activity against papain protease by metal ions including ZnSO(4), CuSO(4), HgCl(2) and CoCl(2). Decreased inhibitory activity against papain protease by detergents including Tween 20, SDS and Brij 35. Thiol protease inhibitor. Has high papain, bovine cathepsin B and fish cathepsins F and X inhibitory activity and inhibits fish cathepsins L, S and K to a lesser extent in vitro. May be involved in innate immunity. In Paralichthys olivaceus (Bastard halibut), this protein is Cystatin-B.